A 273-amino-acid polypeptide reads, in one-letter code: MDRNILRACREDPRRTSTDIQLSVTSPNEPVPSRRTIRRRLQVAGLHGRRPVKKPLVSLKNRKARVEWAKQHLSWGPREWANHIWSDESKFNMFGTDGIQWIRRPIGSRYAPQYQCPTVKHGGGSVMVWGCFSDTSMGPLKRIVGTMDRYVYEDILENTMRPWARANLGRSWVFQQDNDPKHTSGHVANWFRRRRVNLLEWPSQSPDLNPIEHMWEELERRLKGVRASNANQKFAQLEAAWKSIPMTVVQTLLESMPRRCKAVIDAKGYPTKY.

Belongs to the transposase 5 family.

It localises to the nucleus. In terms of biological role, probably essential for transposable element Tcb1 transposition. The insertion of Tcb1 is the main cause of spontaneous mutations. This chain is Transposable element Tcb1 transposase, found in Caenorhabditis briggsae.